Consider the following 385-residue polypeptide: Protein pelota homolog (385 aa).

A Glycyl lysine isopeptide (Lys-Gly) (interchain with G-Cter in SUMO2) cross-link involves residue Lys162. Ser374, Ser380, Ser381, and Ser382 each carry phosphoserine.

Belongs to the eukaryotic release factor 1 family. Pelota subfamily. In terms of assembly, component of the Pelota-HBS1L complex, also named Dom34-Hbs1 complex, composed of PELO and HBS1L. Interacts with PINK1. Interacts with ABCE1. Interacts with CNOT4. A divalent metal cation is required as a cofactor.

The protein localises to the cytoplasm. Component of the Pelota-HBS1L complex, a complex that recognizes stalled ribosomes and triggers the No-Go Decay (NGD) pathway. In the Pelota-HBS1L complex, PELO recognizes ribosomes stalled at the 3' end of an mRNA and engages stalled ribosomes by destabilizing mRNA in the mRNA channel. Following mRNA extraction from stalled ribosomes by the SKI complex, the Pelota-HBS1L complex promotes recruitment of ABCE1, which drives the disassembly of stalled ribosomes, followed by degradation of damaged mRNAs as part of the NGD pathway. As part of the PINK1-regulated signaling, upon mitochondrial damage is recruited to the ribosome/mRNA-ribonucleoprotein complex associated to mitochondrial outer membrane thereby enabling the recruitment of autophagy receptors and induction of mitophagy. In Pongo abelii (Sumatran orangutan), this protein is Protein pelota homolog (PELO).